A 294-amino-acid polypeptide reads, in one-letter code: Acetylglutamate kinase (294 aa).

Substrate contacts are provided by residues 63–64 (GG), Arg-85, and Asn-188.

This sequence belongs to the acetylglutamate kinase family. ArgB subfamily.

Its subcellular location is the cytoplasm. It catalyses the reaction N-acetyl-L-glutamate + ATP = N-acetyl-L-glutamyl 5-phosphate + ADP. It participates in amino-acid biosynthesis; L-arginine biosynthesis; N(2)-acetyl-L-ornithine from L-glutamate: step 2/4. Functionally, catalyzes the ATP-dependent phosphorylation of N-acetyl-L-glutamate. The chain is Acetylglutamate kinase from Methanococcus vannielii (strain ATCC 35089 / DSM 1224 / JCM 13029 / OCM 148 / SB).